We begin with the raw amino-acid sequence, 161 residues long: Large ribosomal subunit protein uL10 (161 aa).

Belongs to the universal ribosomal protein uL10 family. Part of the ribosomal stalk of the 50S ribosomal subunit. The N-terminus interacts with L11 and the large rRNA to form the base of the stalk. The C-terminus forms an elongated spine to which L12 dimers bind in a sequential fashion forming a multimeric L10(L12)X complex.

Functionally, forms part of the ribosomal stalk, playing a central role in the interaction of the ribosome with GTP-bound translation factors. This Campylobacter fetus subsp. fetus (strain 82-40) protein is Large ribosomal subunit protein uL10.